Consider the following 221-residue polypeptide: Flagellar L-ring protein 1 (221 aa).

Residues 1–16 (MKRFLILTPMVLALCG) form the signal peptide. Residue Cys-17 is the site of N-palmitoyl cysteine attachment. The S-diacylglycerol cysteine moiety is linked to residue Cys-17.

Belongs to the FlgH family. As to quaternary structure, the basal body constitutes a major portion of the flagellar organelle and consists of four rings (L,P,S, and M) mounted on a central rod.

It is found in the cell outer membrane. Its subcellular location is the bacterial flagellum basal body. Its function is as follows. Assembles around the rod to form the L-ring and probably protects the motor/basal body from shearing forces during rotation. This is Flagellar L-ring protein 1 from Yersinia pestis.